A 394-amino-acid chain; its full sequence is Chorismate synthase (394 aa).

Residue R48 participates in NADP(+) binding. The interval 52–90 (QSMITTSRGEPDEVSIQSGLQDGYTTGTPIGMTIENKDA) is disordered. Polar residues predominate over residues 66–79 (SIQSGLQDGYTTGT). Residues 125–127 (RSS), G297, 312–316 (HAPTS), and R339 each bind FMN.

The protein belongs to the chorismate synthase family. FMNH2 is required as a cofactor.

It catalyses the reaction 5-O-(1-carboxyvinyl)-3-phosphoshikimate = chorismate + phosphate. It participates in metabolic intermediate biosynthesis; chorismate biosynthesis; chorismate from D-erythrose 4-phosphate and phosphoenolpyruvate: step 7/7. Functionally, catalyzes the anti-1,4-elimination of the C-3 phosphate and the C-6 proR hydrogen from 5-enolpyruvylshikimate-3-phosphate (EPSP) to yield chorismate, which is the branch point compound that serves as the starting substrate for the three terminal pathways of aromatic amino acid biosynthesis. This reaction introduces a second double bond into the aromatic ring system. The chain is Chorismate synthase from Halobacterium salinarum (strain ATCC 700922 / JCM 11081 / NRC-1) (Halobacterium halobium).